The following is a 217-amino-acid chain: Probable transaldolase (217 aa).

K83 functions as the Schiff-base intermediate with substrate in the catalytic mechanism.

Belongs to the transaldolase family. Type 3B subfamily.

The protein resides in the cytoplasm. The catalysed reaction is D-sedoheptulose 7-phosphate + D-glyceraldehyde 3-phosphate = D-erythrose 4-phosphate + beta-D-fructose 6-phosphate. It functions in the pathway carbohydrate degradation; pentose phosphate pathway; D-glyceraldehyde 3-phosphate and beta-D-fructose 6-phosphate from D-ribose 5-phosphate and D-xylulose 5-phosphate (non-oxidative stage): step 2/3. In terms of biological role, transaldolase is important for the balance of metabolites in the pentose-phosphate pathway. The chain is Probable transaldolase from Caulobacter sp. (strain K31).